A 228-amino-acid chain; its full sequence is MKYTNIREGQFLSRPNRFIAKVEIDGKEEICHVKNTGRCRELLIPGVTVFLQEADFEHRKTKYDLIGVRKGNRLINMDSQVPNKVFCEWLEKGYFQELQHIKQEQTFRNSRFDFYLEAGQRKIFVEVKGVTLEEEGVALFPDAPTERGVKHLRELSQAVAAGYEAYVVFIIQMKDIHYFTPNIKTHQAFGDALIQADKQGVKILALDCEVTEDSIEAGDFVTVKLVEG.

This sequence belongs to the SfsA family.

The sequence is that of Sugar fermentation stimulation protein homolog from Desulfitobacterium hafniense (strain Y51).